A 599-amino-acid chain; its full sequence is UvrABC system protein C (599 aa).

The GIY-YIG domain maps to 19–95; it reads ESTGVYIFYD…IKKYRPIMNV (77 aa). In terms of domain architecture, UVR spans 206-241; that stretch reads EEIIEKLYDQMQEYSKNLEFEKAAKIRDKIRLLQNL.

This sequence belongs to the UvrC family. As to quaternary structure, interacts with UvrB in an incision complex.

It is found in the cytoplasm. The UvrABC repair system catalyzes the recognition and processing of DNA lesions. UvrC both incises the 5' and 3' sides of the lesion. The N-terminal half is responsible for the 3' incision and the C-terminal half is responsible for the 5' incision. The sequence is that of UvrABC system protein C from Dictyoglomus thermophilum (strain ATCC 35947 / DSM 3960 / H-6-12).